Reading from the N-terminus, the 443-residue chain is 5-methylthioadenosine/S-adenosylhomocysteine deaminase 1 (443 aa).

The Zn(2+) site is built by H69 and H71. The substrate site is built by E98 and H191. H218 contributes to the Zn(2+) binding site. E221 and D306 together coordinate substrate. D306 is a binding site for Zn(2+).

Belongs to the metallo-dependent hydrolases superfamily. MTA/SAH deaminase family. Zn(2+) is required as a cofactor.

It carries out the reaction S-adenosyl-L-homocysteine + H2O + H(+) = S-inosyl-L-homocysteine + NH4(+). The catalysed reaction is S-methyl-5'-thioadenosine + H2O + H(+) = S-methyl-5'-thioinosine + NH4(+). In terms of biological role, catalyzes the deamination of 5-methylthioadenosine and S-adenosyl-L-homocysteine into 5-methylthioinosine and S-inosyl-L-homocysteine, respectively. Is also able to deaminate adenosine. This is 5-methylthioadenosine/S-adenosylhomocysteine deaminase 1 from Syntrophus aciditrophicus (strain SB).